The following is a 145-amino-acid chain: 3-dehydroquinate dehydratase (145 aa).

The active-site Proton acceptor is the Y23. The substrate site is built by N73, H79, and D86. Residue H99 is the Proton donor of the active site. Substrate contacts are provided by residues 100–101 (LS) and R110.

It belongs to the type-II 3-dehydroquinase family. Homododecamer.

It carries out the reaction 3-dehydroquinate = 3-dehydroshikimate + H2O. The protein operates within metabolic intermediate biosynthesis; chorismate biosynthesis; chorismate from D-erythrose 4-phosphate and phosphoenolpyruvate: step 3/7. In terms of biological role, catalyzes a trans-dehydration via an enolate intermediate. The chain is 3-dehydroquinate dehydratase from Desulfitobacterium hafniense (strain Y51).